Consider the following 2259-residue polypeptide: MKDKRKKKDRTWAEAARLALEKHPNSPMTAKQILEVIQKEGLKETGTSPLACLNAMLHTNTRVGDGTFFKIPGKSGLYALRKEESSCPVDGTLDLVVDPDLDGAEMAEASANGEENRVCTKQVTDEVSSTRDCSLTNTAVQSKLVSSFQQHTKKALKQALRQQQKRRNGVSMMVNKTVPRVVLTPLKVSDEQSDSPSGSESKNGEADSSDKEMKHGQKSPTGKQTSQHLKRLKKSGLGHLKWTKAEDIDIETPGSILVNTNLRALINKHTFASFPQHFQQYLLLLLPEVDRQMGSDGILRLSTSALNNEFFAYAAQGWKQRLAEGEFTPEMQLRIRQEIEKEKKTEPWKEKFFERFYGERSGMSREESIKLTSGPNHEGAEGSSSHGDSGIPGPSAQNALEEQQPKILKSSASLEPDFCTTVCPMLEVPVKDVMTESETEDIFIPEESVIQEEVAEEVETSIYECQDEHLKTIPAFSEESESPATPCEEPQVAAPEDSLESCVVMNDILHTLPHIEVKIVEKLECPQEEMSVVIDQLEICDSLLPCPSSVTHILDVEQKEQETTIETSAMALREGPSSLESQLPNEGIAVDMELQSDPEEQLSENACISETSFSSESPEGACASLPSPGGETQSTSEESCTPASLETTFCSEVSSTENTDKYNQRNPTGESLHASLVSEVSPLATSPEISEASLMSNLPLTSEASPVSNLPLTSEASPMSDLPPTSETSSESSMPLTSETPFVSSLPIPAETSPISNSSVNERMVHQQRKSPSGSEEANSPQKEEPSIPTKPLGESLVSHPKPLSTIPEPINMSSAMVPEALPPEGLHSQTLSQEPCNAHVEMEKLYASSIPELPSSEMTKVKNHSVLQRPEKKGLSAPLEVPVFSEETETKGIELPPAKLQDKQYAPSVDKATFLEGSRNKIHKQSSTLNRLETSHTSKVSEPSKSPDGIRNDNRESEISKRKTVEHSFGICKEKRARIEDDQSARSLASSSPPEKEQPPREEPRVPPLKIQLSKIGPPFIIKSQPVSKAESRASTSTSVSSGRNTGARTLADIKARAQQARAQREAAAAAAVAAAASIVSGAMGSPGEGGKARTLAHIKEQTKAKLFAKHQSRAHLFQTSKETRLPSVSTKEDSLNMEASPTPETKMEGSTGVIIINPNCRSPSSKPTHIREITTVLQQPLNPPQIPETATDLSVHSSDDNIPVSHLTEKIVSSTSSENSSVPILHNKSPINPIPMSVCSTAMSGAIKEHPFVSPVDKSSVLMSVDSANSTISACNISMLKSIQGSDAPCIALVPKCINRTPIPAAPEGTGQSNSMDGKALLVPSSKAANVISNQYTSVPAPTIASNLPNHLCTSSVLIPPTGINNRFVSEKIAMPGSEEQAAVSIGATMRTALSCGDSVAVTDSLVPRSPIAMFAGNMLTANSYNCPPKLSGENLDNNSGPLNRTDNSEKPQQPAGGFVPATINRSIPCKVIVDHSTTLTSNLSLTVSIESGDSSLDSQTRSVRTDVSIQPVACPQVSVISRPEQATSEGLDHGSVFIAAPTAKQDCKTLQATCTSLRELPLTLPDKLNEVTVPTHGFAEQARNSSTFKKETDTACSNQYNPGNRICWSEDPMRNTAPPVVSHSSSSKQKEHPEQTGLKAVKTEHVSYAHVSDLHPRNLITNVSLPVKPEPHEVDKGFRMDTEDFPGPERPPPVTEVTSSASVQPTQTMKPSTTSPVEEAISLAPDTLKRIPSASSSSCRLSSVEANNPLVTQLLQGNLPLEKVLPQPRLGAKLEINRLPLPLQTTSVGKTGLERNMVEMPSSSPNPDGKGYLAGTLAPVQMRKRENHPKKRAARTVGDHAQVKCEPGKMVMEPDVKAVPCVISPSMSQLGHNQPFKQERLNKPSMANRIMPSPEVKQQKRLLPACSFQPSLFHVNKNEGFHADTGTSHRQQFYQMPMAARGPLPTPALLQNSPKTPVGCNAFAFNRHLEQKALGDVNLPTAPHQLRLANMLSPNMPIKEGEDGGGTTHTMPSKAVVHAPLPPPPPPPPPPPPPLALPPPPPPPPPLPPPLPTVEVPSDQKQPPVNMETTKRLSWPQSTGICSNIKSEPLSFEESLSSSCELGMKQVPYDQNEVKEQLKAFALKNADFSSYLLSEPQKPFTQLAAQKLPVPQQQPLCGSYPTIHFGSTNFKRAASAIEKSIGILGSGSNPATSTGLTGQNTQMPVQNFADNSNADELELKCSCRLKAMIVCKGCGAFCHDDCIGPSKLCVACLVVR.

The region spanning 10 to 83 (RTWAEAARLA…KSGLYALRKE (74 aa)) is the HTH HARE-type domain. The interval 181–230 (VVLTPLKVSDEQSDSPSGSESKNGEADSSDKEMKHGQKSPTGKQTSQHLK) is disordered. Basic and acidic residues predominate over residues 202–215 (KNGEADSSDKEMKH). Residues 218–227 (KSPTGKQTSQ) are compositionally biased toward polar residues. Residues 253–362 (PGSILVNTNL…FERFYGERSG (110 aa)) enclose the DEUBAD domain. Disordered regions lie at residues 364–399 (SREESIKLTSGPNHEGAEGSSSHGDSGIPGPSAQNA), 607–643 (CISETSFSSESPEGACASLPSPGGETQSTSEESCTPA), 703–810 (EASP…IPEP), 857–1012 (SEMT…PLKI), 1025–1049 (SQPVSKAESRASTSTSVSSGRNTGA), 1126–1150 (RLPSVSTKEDSLNMEASPTPETKME), 1433–1462 (LSGENLDNNSGPLNRTDNSEKPQQPAGGFV), 1614–1643 (DPMRNTAPPVVSHSSSSKQKEHPEQTGLKA), 1687–1719 (DFPGPERPPPVTEVTSSASVQPTQTMKPSTTSP), and 1993–2075 (NMLS…TTKR). 3 stretches are compositionally biased toward polar residues: residues 607-617 (CISETSFSSES), 630-643 (GETQSTSEESCTPA), and 703-717 (EASPVSNLPLTSEAS). Residues 722–741 (LPPTSETSSESSMPLTSETP) are compositionally biased toward low complexity. 2 stretches are compositionally biased toward polar residues: residues 770–781 (KSPSGSEEANSP) and 926–945 (QSSTLNRLETSHTSKVSEPS). 2 stretches are compositionally biased toward basic and acidic residues: residues 949 to 985 (DGIRNDNRESEISKRKTVEHSFGICKEKRARIEDDQS) and 995 to 1006 (PEKEQPPREEPR). A compositionally biased stretch (low complexity) spans 1034 to 1043 (RASTSTSVSS). A compositionally biased stretch (polar residues) spans 1437–1448 (NLDNNSGPLNRT). Polar residues predominate over residues 1699-1719 (EVTSSASVQPTQTMKPSTTSP). Residues 2023 to 2055 (PLPPPPPPPPPPPPPLALPPPPPPPPPLPPPLP) show a composition bias toward pro residues. The PHD-type; atypical zinc-finger motif lies at 2221–2258 (ELKCSCRLKAMIVCKGCGAFCHDDCIGPSKLCVACLVV).

This sequence belongs to the Asx family. Core component of the polycomb repressive deubiquitinase (PR-DUB) complex, at least composed of BAP1, one of ASXL1, ASXL2 or (probably) ASXL3, and one of MBD5 or MBD6. Distinct combinations of ASXL and MBD proteins may preferentially bind specific histone modification marks. The PR-DUB core associates with a number of accessory proteins, including FOXK1, FOXK2, KDM1B, HCFC1 and OGT; KDM1B specifically associates with ASXL2 PR-DUB complexes. Interacts (via PHD domain) with MBD5 and MBD6 (via MBD domain); the interaction is probably direct and mediates association of MBD proteins with the PR-DUB core.

It localises to the nucleus. Functionally, putative Polycomb group (PcG) protein. PcG proteins act by forming multiprotein complexes, which are required to maintain the transcriptionally repressive state of homeotic genes throughout development. PcG proteins are not required to initiate repression, but to maintain it during later stages of development. They probably act via methylation of histones, rendering chromatin heritably changed in its expressibility. Non-catalytic component of the PR-DUB complex, a complex that specifically mediates deubiquitination of histone H2A monoubiquitinated at 'Lys-119' (H2AK119ub1). The PR-DUB complex is an epigenetic regulator of gene expression and acts as a transcriptional coactivator, affecting genes involved in development, cell communication, signaling, cell proliferation and cell viability. ASXL1, ASXL2 and ASXL3 function redundantly in the PR-DUB complex and are essential for chromatin recruitment and transcriptional activation of associated genes. The polypeptide is Putative Polycomb group protein ASXL3 (Asxl3) (Mus musculus (Mouse)).